The sequence spans 416 residues: tRNA(Met) cytidine acetate ligase (416 aa).

ATP contacts are provided by residues 7–20, Gly-102, Asn-166, and Arg-191; that span reads VAEY…HLYL.

It belongs to the TmcAL family.

It localises to the cytoplasm. The catalysed reaction is cytidine(34) in elongator tRNA(Met) + acetate + ATP = N(4)-acetylcytidine(34) in elongator tRNA(Met) + AMP + diphosphate. Its function is as follows. Catalyzes the formation of N(4)-acetylcytidine (ac(4)C) at the wobble position of elongator tRNA(Met), using acetate and ATP as substrates. First activates an acetate ion to form acetyladenylate (Ac-AMP) and then transfers the acetyl group to tRNA to form ac(4)C34. The protein is tRNA(Met) cytidine acetate ligase of Syntrophomonas wolfei subsp. wolfei (strain DSM 2245B / Goettingen).